We begin with the raw amino-acid sequence, 472 residues long: Adenosylhomocysteinase (472 aa).

The substrate site is built by Thr61, Asp136, and Glu196. Residue 197-199 participates in NAD(+) binding; that stretch reads TTT. Residues Lys226 and Asp230 each contribute to the substrate site. NAD(+) is bound by residues Asn231, 260 to 265, Glu283, Asn318, 339 to 341, and Asn384; these read GYGDVG and IGH.

This sequence belongs to the adenosylhomocysteinase family. Requires NAD(+) as cofactor.

Its subcellular location is the cytoplasm. The catalysed reaction is S-adenosyl-L-homocysteine + H2O = L-homocysteine + adenosine. The protein operates within amino-acid biosynthesis; L-homocysteine biosynthesis; L-homocysteine from S-adenosyl-L-homocysteine: step 1/1. Its function is as follows. May play a key role in the regulation of the intracellular concentration of adenosylhomocysteine. The chain is Adenosylhomocysteinase from Cupriavidus pinatubonensis (strain JMP 134 / LMG 1197) (Cupriavidus necator (strain JMP 134)).